Reading from the N-terminus, the 142-residue chain is Large ribosomal subunit protein uL13 (142 aa).

It belongs to the universal ribosomal protein uL13 family. As to quaternary structure, part of the 50S ribosomal subunit.

In terms of biological role, this protein is one of the early assembly proteins of the 50S ribosomal subunit, although it is not seen to bind rRNA by itself. It is important during the early stages of 50S assembly. This Francisella tularensis subsp. mediasiatica (strain FSC147) protein is Large ribosomal subunit protein uL13.